The sequence spans 177 residues: Deoxyuridine 5'-triphosphate nucleotidohydrolase (177 aa).

Residues 83 to 85 (RSG), asparagine 96, 100 to 102 (TID), and lysine 110 contribute to the substrate site. Polar residues predominate over residues 150 to 163 (DLTSSQTDLSNQPN). The tract at residues 150–177 (DLTSSQTDLSNQPNTGRGTGGFGSTGQK) is disordered. Over residues 166 to 177 (RGTGGFGSTGQK) the composition is skewed to gly residues.

It belongs to the dUTPase family. Requires Mg(2+) as cofactor.

It catalyses the reaction dUTP + H2O = dUMP + diphosphate + H(+). Its pathway is pyrimidine metabolism; dUMP biosynthesis; dUMP from dCTP (dUTP route): step 2/2. This enzyme is involved in nucleotide metabolism: it produces dUMP, the immediate precursor of thymidine nucleotides and it decreases the intracellular concentration of dUTP so that uracil cannot be incorporated into DNA. In Bartonella bacilliformis (strain ATCC 35685 / KC583 / Herrer 020/F12,63), this protein is Deoxyuridine 5'-triphosphate nucleotidohydrolase.